Consider the following 144-residue polypeptide: D-aminoacyl-tRNA deacylase (144 aa).

The short motif at Gly-136 to Pro-137 is the Gly-cisPro motif, important for rejection of L-amino acids element.

This sequence belongs to the DTD family. As to quaternary structure, homodimer.

The protein localises to the cytoplasm. The catalysed reaction is glycyl-tRNA(Ala) + H2O = tRNA(Ala) + glycine + H(+). The enzyme catalyses a D-aminoacyl-tRNA + H2O = a tRNA + a D-alpha-amino acid + H(+). In terms of biological role, an aminoacyl-tRNA editing enzyme that deacylates mischarged D-aminoacyl-tRNAs. Also deacylates mischarged glycyl-tRNA(Ala), protecting cells against glycine mischarging by AlaRS. Acts via tRNA-based rather than protein-based catalysis; rejects L-amino acids rather than detecting D-amino acids in the active site. By recycling D-aminoacyl-tRNA to D-amino acids and free tRNA molecules, this enzyme counteracts the toxicity associated with the formation of D-aminoacyl-tRNA entities in vivo and helps enforce protein L-homochirality. The protein is D-aminoacyl-tRNA deacylase of Pasteurella multocida (strain Pm70).